An 86-amino-acid polypeptide reads, in one-letter code: Small ribosomal subunit protein bS20 (86 aa).

Positions 1–11 are enriched in basic residues; it reads MANIKSQKKRV. The interval 1–20 is disordered; sequence MANIKSQKKRVRTNEKAHQR.

This sequence belongs to the bacterial ribosomal protein bS20 family.

Binds directly to 16S ribosomal RNA. The protein is Small ribosomal subunit protein bS20 of Bifidobacterium animalis subsp. lactis (strain AD011).